The primary structure comprises 100 residues: Large ribosomal subunit protein bL21 (100 aa).

Belongs to the bacterial ribosomal protein bL21 family. As to quaternary structure, part of the 50S ribosomal subunit. Contacts protein L20.

This protein binds to 23S rRNA in the presence of protein L20. This Wolbachia pipientis subsp. Culex pipiens (strain wPip) protein is Large ribosomal subunit protein bL21.